The following is a 1323-amino-acid chain: Alpha-factor-transporting ATPase (1323 aa).

The span at 1-10 (MFQEKSEKSS) shows a compositional bias: basic and acidic residues. Residues 1 to 23 (MFQEKSEKSSFPKRSSSLRSPSD) are disordered. Low complexity predominate over residues 12-23 (PKRSSSLRSPSD). An N-linked (GlcNAc...) asparagine glycan is attached at asparagine 37. The chain crosses the membrane as a helical span at residues 42–62 (WPLILVGILLMGGSAIATLMN). Residues 45–337 (ILVGILLMGG…ITELLAILNT (293 aa)) form the ABC transmembrane type-1 1 domain. N-linked (GlcNAc...) asparagine glycosylation is present at asparagine 83. Residues 93–113 (LCVGLIGIGCCKMILVWLGMF) traverse the membrane as a helical segment. Residue asparagine 136 is glycosylated (N-linked (GlcNAc...) asparagine). The next 4 membrane-spanning stretches (helical) occupy residues 169 to 189 (ILASLMQTIVLILALLIMSFY), 192 to 212 (WSTTLIIMASFPIMALCGWYF), 281 to 301 (VLKTLTLMMFVQGFWFGNYLL), and 315 to 335 (FSSCLMLGQAVSGITELLAIL). Residues 373–609 (IYFKNVWFES…EIVQNYKSQG (237 aa)) form the ABC transporter 1 domain. 408–415 (GKSGSGKS) provides a ligand contact to ATP. Asparagine 450 carries N-linked (GlcNAc...) asparagine glycosylation. The chain crosses the membrane as a helical span at residues 677–697 (LLGFGILLAIFQGVSSPVFSY). The ABC transmembrane type-1 2 domain occupies 678–969 (LGFGILLAIF…LIHQLPEITR (292 aa)). An N-linked (GlcNAc...) asparagine glycan is attached at asparagine 714. A helical membrane pass occupies residues 724–744 (CISLSIAIFTGVTSYLSEFIL). N-linked (GlcNAc...) asparagine glycosylation is found at asparagine 777 and asparagine 789. The next 3 membrane-spanning stretches (helical) occupy residues 801 to 821 (FFPLLANLVSMTLIGIIWSIV), 828 to 848 (LVGISFVPLVLLVTVLYGKIL), and 909 to 929 (IGFAISDLFSSIGQAIILFYG). Asparagine 939 is a glycosylation site (N-linked (GlcNAc...) asparagine). Residues 941–961 (SQLLQVITLLSFTISNASILI) form a helical membrane-spanning segment. N-linked (GlcNAc...) asparagine glycosylation is found at asparagine 991, asparagine 1030, and asparagine 1039. The region spanning 1035–1321 (ISFNNVSFSY…DGEFTKITKT (287 aa)) is the ABC transporter 2 domain. Residue 1071–1078 (GQSGSGKS) participates in ATP binding. Asparagine 1097 is a glycosylation site (N-linked (GlcNAc...) asparagine). A helical membrane pass occupies residues 1120–1140 (GLLCQTIAIVPQFPKFFSGTI). N-linked (GlcNAc...) asparagine glycans are attached at residues asparagine 1143, asparagine 1149, and asparagine 1157. Residues 1170–1190 (ILKLVNLHQFIVSLPQGLLTI) form a helical membrane-spanning segment. N-linked (GlcNAc...) asparagine glycosylation is present at asparagine 1192. The segment covering 1194–1208 (SDNDNDNGNENENEN) has biased composition (acidic residues). The segment at 1194 to 1217 (SDNDNDNGNENENENENGNTISTS) is disordered.

The protein belongs to the ABC transporter superfamily. Alpha-factor sex pheromone exporter (TC 3.A.1.206) family.

The protein resides in the membrane. It carries out the reaction an [alpha-factor](in) + ATP + H2O = an [alpha-factor](out) + ADP + phosphate + H(+). This is Alpha-factor-transporting ATPase (HST6) from Candida albicans (strain WO-1) (Yeast).